Consider the following 286-residue polypeptide: GTP-binding protein 8 (286 aa).

The 174-residue stretch at 105–278 folds into the EngB-type G domain; that stretch reads KQPEVCFMGR…RCFIAHVTGK (174 aa). Residues 113–120, 142–146, 160–163, 222–225, and 257–259 contribute to the GTP site; these read GRSNVGKS, GHTKK, DMPG, TKID, and VSS. Residues Ser-120 and Thr-144 each coordinate Mg(2+).

The protein belongs to the TRAFAC class TrmE-Era-EngA-EngB-Septin-like GTPase superfamily. EngB GTPase family. It depends on Mg(2+) as a cofactor.

In Danio rerio (Zebrafish), this protein is GTP-binding protein 8 (gtpbp8).